Consider the following 137-residue polypeptide: MLSPKRTKYRKYHRGRMRGKATRGNEVTFGDYGLQALEPTWITSRQIEAARRTITRYTKRGAALWIRIFPDKTVTARAAESRMGSGKGAVDYWVAVVKPGTILFEIASVPEEIAATALHLASYKLPIKTKFITRIKI.

Belongs to the universal ribosomal protein uL16 family. As to quaternary structure, part of the 50S ribosomal subunit.

The protein localises to the plastid. The protein resides in the chloroplast. This chain is Large ribosomal subunit protein uL16c, found in Trieres chinensis (Marine centric diatom).